The chain runs to 184 residues: ATP synthase subunit b, chloroplastic (184 aa).

Residues 27 to 49 (LATNPINLSVVLGVLIFFGKGVL) form a helical membrane-spanning segment.

This sequence belongs to the ATPase B chain family. As to quaternary structure, F-type ATPases have 2 components, F(1) - the catalytic core - and F(0) - the membrane proton channel. F(1) has five subunits: alpha(3), beta(3), gamma(1), delta(1), epsilon(1). F(0) has four main subunits: a(1), b(1), b'(1) and c(10-14). The alpha and beta chains form an alternating ring which encloses part of the gamma chain. F(1) is attached to F(0) by a central stalk formed by the gamma and epsilon chains, while a peripheral stalk is formed by the delta, b and b' chains.

The protein resides in the plastid. The protein localises to the chloroplast thylakoid membrane. In terms of biological role, f(1)F(0) ATP synthase produces ATP from ADP in the presence of a proton or sodium gradient. F-type ATPases consist of two structural domains, F(1) containing the extramembraneous catalytic core and F(0) containing the membrane proton channel, linked together by a central stalk and a peripheral stalk. During catalysis, ATP synthesis in the catalytic domain of F(1) is coupled via a rotary mechanism of the central stalk subunits to proton translocation. Component of the F(0) channel, it forms part of the peripheral stalk, linking F(1) to F(0). This is ATP synthase subunit b, chloroplastic from Cuscuta exaltata (Tall dodder).